Here is a 264-residue protein sequence, read N- to C-terminus: Proliferating cell nuclear antigen 2 (264 aa).

The protein belongs to the PCNA family. As to quaternary structure, homotrimer. Oligomer. Interacts with ORC1 (via PIP-box motif). Interacts with FEN1.

Its subcellular location is the nucleus. The protein resides in the chromosome. It localises to the cytoplasm. In terms of biological role, may be involved in DNA damage response. Appears not to be involved in DNA replication in trophozoites. The sequence is that of Proliferating cell nuclear antigen 2 from Plasmodium falciparum (isolate 3D7).